The primary structure comprises 151 residues: MGMKSKFKRFFELDDDASMYEEDAVSRDFVEEVEEPRRRSRTGVKQERETGQNVVSLQSVQKTAKVVLLEPRTYDEAQEIADQLKNRKAVIINLQRISHEQAKRVVDFLSGTVYAIGGDIQKLGMNIFLCTPDNVDVTGTITDMIQDGYRS.

Residues Glu-31–Asn-53 are disordered.

Belongs to the SepF family. Homodimer. Interacts with FtsZ.

The protein localises to the cytoplasm. Functionally, cell division protein that is part of the divisome complex and is recruited early to the Z-ring. Probably stimulates Z-ring formation, perhaps through the cross-linking of FtsZ protofilaments. Its function overlaps with FtsA. The protein is Cell division protein SepF of Halalkalibacterium halodurans (strain ATCC BAA-125 / DSM 18197 / FERM 7344 / JCM 9153 / C-125) (Bacillus halodurans).